The chain runs to 622 residues: V-type ATP synthase subunit I 1 (622 aa).

The next 8 helical transmembrane spans lie at 306–326 (WVNL…YWEV), 328–348 (ISGF…ADAG), 373–393 (PAWC…ALVC), 428–448 (QMHV…LIVV), 459–479 (AEFG…NLIV), 485–505 (PLTG…FIFV), 532–552 (VFAD…GGAI), and 562–582 (PLFA…GHGL).

This sequence belongs to the V-ATPase 116 kDa subunit family.

Its subcellular location is the cell membrane. Its function is as follows. Produces ATP from ADP in the presence of a proton gradient across the membrane. This is V-type ATP synthase subunit I 1 (atpI1) from Treponema pallidum (strain Nichols).